A 95-amino-acid polypeptide reads, in one-letter code: MSLDAKTVTRIARLARIGLQPEEIETLGKDMGSIIDWVEQLKEVDVTGVDPMIGTGLAKPRLREDRVTDGNCRDKVLSNAPEREGPFYTVPKVVE.

This sequence belongs to the GatC family. In terms of assembly, heterotrimer of A, B and C subunits.

The enzyme catalyses L-glutamyl-tRNA(Gln) + L-glutamine + ATP + H2O = L-glutaminyl-tRNA(Gln) + L-glutamate + ADP + phosphate + H(+). The catalysed reaction is L-aspartyl-tRNA(Asn) + L-glutamine + ATP + H2O = L-asparaginyl-tRNA(Asn) + L-glutamate + ADP + phosphate + 2 H(+). Allows the formation of correctly charged Asn-tRNA(Asn) or Gln-tRNA(Gln) through the transamidation of misacylated Asp-tRNA(Asn) or Glu-tRNA(Gln) in organisms which lack either or both of asparaginyl-tRNA or glutaminyl-tRNA synthetases. The reaction takes place in the presence of glutamine and ATP through an activated phospho-Asp-tRNA(Asn) or phospho-Glu-tRNA(Gln). In Gluconobacter oxydans (strain 621H) (Gluconobacter suboxydans), this protein is Aspartyl/glutamyl-tRNA(Asn/Gln) amidotransferase subunit C.